The chain runs to 203 residues: dITP/XTP pyrophosphatase (203 aa).

Position 8 to 13 (8 to 13 (SNNAGK)) interacts with substrate. Mg(2+) is bound by residues Asp-40 and Asp-69. The active-site Proton acceptor is Asp-69. Substrate contacts are provided by residues Ser-70, 152–155 (FGYD), Lys-175, and 180–181 (HR).

The protein belongs to the HAM1 NTPase family. Homodimer. Mg(2+) is required as a cofactor.

The catalysed reaction is XTP + H2O = XMP + diphosphate + H(+). It carries out the reaction dITP + H2O = dIMP + diphosphate + H(+). It catalyses the reaction ITP + H2O = IMP + diphosphate + H(+). Pyrophosphatase that catalyzes the hydrolysis of nucleoside triphosphates to their monophosphate derivatives, with a high preference for the non-canonical purine nucleotides XTP (xanthosine triphosphate), dITP (deoxyinosine triphosphate) and ITP. Seems to function as a house-cleaning enzyme that removes non-canonical purine nucleotides from the nucleotide pool, thus preventing their incorporation into DNA/RNA and avoiding chromosomal lesions. The sequence is that of dITP/XTP pyrophosphatase from Nitrosomonas europaea (strain ATCC 19718 / CIP 103999 / KCTC 2705 / NBRC 14298).